Consider the following 155-residue polypeptide: Endoribonuclease YbeY (155 aa).

Zn(2+) is bound by residues histidine 114, histidine 118, and histidine 124.

This sequence belongs to the endoribonuclease YbeY family. It depends on Zn(2+) as a cofactor.

It localises to the cytoplasm. Functionally, single strand-specific metallo-endoribonuclease involved in late-stage 70S ribosome quality control and in maturation of the 3' terminus of the 16S rRNA. This Citrobacter koseri (strain ATCC BAA-895 / CDC 4225-83 / SGSC4696) protein is Endoribonuclease YbeY.